We begin with the raw amino-acid sequence, 162 residues long: Anaerobic nitrite reductase NSHB2 (162 aa).

The 144-residue stretch at Ser-16–Lys-159 folds into the Globin domain. The short motif at Glu-49–Ser-53 is the Homodimerization element. Heme b-binding residues include Ser-59, Lys-73, His-77, Arg-100, Thr-104, and His-105. The Homodimerization signature appears at Asp-112–Glu-124.

Belongs to the plant globin family. Homodimer. Heme b serves as cofactor. As to expression, mainly expressed in germinating seeds, seedlings, roots, flowers and leaves.

It localises to the cytoplasm. It is found in the nucleus. It catalyses the reaction Fe(III)-heme b-[protein] + nitric oxide + H2O = Fe(II)-heme b-[protein] + nitrite + 2 H(+). Its function is as follows. Phytoglobin that reduces nitrite to nitric oxide under anoxic conditions (e.g. during flooding or in waterlogged soil). May not function as an oxygen storage or transport protein. Has an unusually high affinity for O(2) through an hexacoordinate heme iron because of a very low dissociation constant. Promotes tolerance to low potassium K(+) conditions. The chain is Anaerobic nitrite reductase NSHB2 from Oryza sativa subsp. indica (Rice).